Here is a 159-residue protein sequence, read N- to C-terminus: Putative pre-16S rRNA nuclease (159 aa).

The protein belongs to the YqgF nuclease family.

Its subcellular location is the cytoplasm. Its function is as follows. Could be a nuclease involved in processing of the 5'-end of pre-16S rRNA. This Thermobifida fusca (strain YX) protein is Putative pre-16S rRNA nuclease.